Reading from the N-terminus, the 421-residue chain is 3-isopropylmalate dehydratase large subunit (421 aa).

[4Fe-4S] cluster is bound by residues cysteine 302, cysteine 362, and cysteine 365.

This sequence belongs to the aconitase/IPM isomerase family. LeuC type 2 subfamily. Heterodimer of LeuC and LeuD. Requires [4Fe-4S] cluster as cofactor.

The enzyme catalyses (2R,3S)-3-isopropylmalate = (2S)-2-isopropylmalate. It participates in amino-acid biosynthesis; L-leucine biosynthesis; L-leucine from 3-methyl-2-oxobutanoate: step 2/4. Catalyzes the isomerization between 2-isopropylmalate and 3-isopropylmalate, via the formation of 2-isopropylmaleate. This Campylobacter fetus subsp. fetus (strain 82-40) protein is 3-isopropylmalate dehydratase large subunit.